Consider the following 687-residue polypeptide: Chloride channel protein ClC-Kb (687 aa).

The Cytoplasmic portion of the chain corresponds to 1–50 (MEEIVGLREGSPRKPVPLQELWRPCPRIRRNIQGSLEWLKERLFRVGEDW). Helical transmembrane passes span 51–82 (YFLV…KWLY) and 91–111 (LRYL…SGFS). Positions 116–127 (PSSGGSGIPEVK) form an intramembrane region, helical. Ser121 contacts chloride. A run of 2 helical transmembrane segments spans residues 141–160 (IKNF…TGST) and 161–180 (IFLG…AAYL). N-linked (GlcNAc...) asparagine glycosylation occurs at Asn193. Positions 203 to 224 (AGAAVGVATVFAAPISGVLFSI) form an intramembrane region, helical. A helical membrane pass occupies residues 236–255 (YWRGFFAATCGAFMFHLLAV). Residues Glu259, Glu261, Asp278, and Glu281 each coordinate Ca(2+). 2 helical membrane-spanning segments follow: residues 282-310 (IFFF…LFFL) and 325-342 (PLYS…TYPP). The segment at residues 349–360 (ASRLSMSEYLET) is an intramembrane region (helical). A run of 2 helical transmembrane segments spans residues 400 to 420 (GTLV…TTIP) and 421 to 440 (IPAG…GRLF). Phe426 serves as a coordination point for chloride. An intramembrane region (helical) is located at residues 464–496 (GAYALAGAAAFSGAVTHTLSTALLAFEVSGQIV). The helical transmembrane segment at 500 to 520 (PVLMAVLAANAICQSYQPSFY) threads the bilayer. Topologically, residues 521 to 687 (DGTIIVKKLP…STLTNPPAPK (167 aa)) are cytoplasmic. CBS domains are found at residues 551–609 (MNCT…DSAS) and 626–687 (CPTQ…PAPK).

The protein belongs to the chloride channel (TC 2.A.49) family. CLCNKB subfamily. Homodimer. Interacts with BSND. In terms of processing, N-glycosylated. Expressed predominantly in the kidney. Expressed in all segments of the nephron examined, including the S2 segment and the glomerulus.

The protein localises to the basolateral cell membrane. The enzyme catalyses chloride(in) = chloride(out). The catalysed reaction is iodide(out) = iodide(in). It carries out the reaction nitrate(in) = nitrate(out). It catalyses the reaction bromide(in) = bromide(out). Functionally, anion-selective channel permeable to small monovalent anions with ion selectivity for chloride &gt; bromide &gt; nitrate &gt; iodide. Forms a homodimeric channel where each subunit has its own ion conduction pathway. May conduct double-barreled currents controlled by two types of gates, two fast gates that control each subunit independently and a slow common gate that opens and shuts off both subunits simultaneously. Assembles with the regulatory subunit BSND/Barttin for sorting at the basolateral plasma membrane domain and functional switch to the ion conducting state. CLCNKB:BSND channels display mostly a linear current-voltage relationship controlled by common gate. Mediates chloride conductance along nephron segments, namely the thick ascending limb of Henle's loop, convoluted tubule and the collecting duct, contributing to the maintenance of systemic acid-base and electrolyte homeostasis. Conducts chloride currents in the stria vascularis of the inner ear to establish the endocochlear potential necessary for normal hearing. This is Chloride channel protein ClC-Kb from Rattus norvegicus (Rat).